Consider the following 296-residue polypeptide: Phosphoribosylaminoimidazole-succinocarboxamide synthase (296 aa).

This sequence belongs to the SAICAR synthetase family.

It catalyses the reaction 5-amino-1-(5-phospho-D-ribosyl)imidazole-4-carboxylate + L-aspartate + ATP = (2S)-2-[5-amino-1-(5-phospho-beta-D-ribosyl)imidazole-4-carboxamido]succinate + ADP + phosphate + 2 H(+). Its pathway is purine metabolism; IMP biosynthesis via de novo pathway; 5-amino-1-(5-phospho-D-ribosyl)imidazole-4-carboxamide from 5-amino-1-(5-phospho-D-ribosyl)imidazole-4-carboxylate: step 1/2. This Pelobacter propionicus (strain DSM 2379 / NBRC 103807 / OttBd1) protein is Phosphoribosylaminoimidazole-succinocarboxamide synthase.